The primary structure comprises 246 residues: Flagellar brake protein YcgR (246 aa).

A PilZ domain is found at 128 to 232; sequence KRAHFRAYVG…QAERQLLQAI (105 aa).

It belongs to the YcgR family. In terms of assembly, monomer. Interacts with the flagellar basal bodies.

The protein localises to the bacterial flagellum basal body. Acts as a flagellar brake, regulating swimming and swarming in a bis-(3'-5') cyclic diguanylic acid (c-di-GMP)-dependent manner. Binds 1 c-di-GMP dimer per subunit. Increasing levels of c-di-GMP lead to decreased motility. In Thioalkalivibrio sulfidiphilus (strain HL-EbGR7), this protein is Flagellar brake protein YcgR.